The sequence spans 547 residues: MSFDVTTTEPWATLSERYTAMKATTLRDLFASNPNRAQELSFEAAGLHVDLSKNLIDAETVAAFTALAKASGMREKIKAMFDGEHINNTEDRAVLHTALRLAVDAELNVDGQDVAADVHEVLGRMRDFATSLRNGSWRGYSNHTIKTIVNIGIGGSDLGPAMATKALRTYATAGINAKFVSNVDPADMHAVLDELDPESTLFVVASKTFTTQETLANAHAAKRWLVAAAGGDESAVAKHFVAVSTNAEKVAEFGIDTKNMFGFWNWVGGRYSVDSAIGLSLMSVIGPMDFMRFLDGFRAMDEHFRTADFESNIPVLMGMLNVFYNDFFGAETHAVLPYSQDLGRFPAYLQQLTMESNGKSVRHDGSAVTTNTGEIYWGEPGTNGQHAFFQLIHQGTKLIPADFIGFARPKEDLPTASGEGSMHDLLMSNFFAQTKVLAFGKTAEEIAAEGVSPELVAHKVMPGNRPTTTIMAEELTPFALGALIALYEHIVFVEGVIWDINSFDQWGVELGKQQANDLAPAVAGEVAVDSGDSSTDALISWYRSHRG.

The Proton donor role is filled by Glu-355. Residues His-386 and Lys-512 contribute to the active site.

It belongs to the GPI family.

The protein resides in the cytoplasm. It catalyses the reaction alpha-D-glucose 6-phosphate = beta-D-fructose 6-phosphate. Its pathway is carbohydrate biosynthesis; gluconeogenesis. It participates in carbohydrate degradation; glycolysis; D-glyceraldehyde 3-phosphate and glycerone phosphate from D-glucose: step 2/4. Catalyzes the reversible isomerization of glucose-6-phosphate to fructose-6-phosphate. The polypeptide is Glucose-6-phosphate isomerase (Corynebacterium diphtheriae (strain ATCC 700971 / NCTC 13129 / Biotype gravis)).